The following is a 302-amino-acid chain: Sulfate adenylyltransferase subunit 2 (302 aa).

This sequence belongs to the PAPS reductase family. CysD subfamily. In terms of assembly, heterodimer composed of CysD, the smaller subunit, and CysN.

The enzyme catalyses sulfate + ATP + H(+) = adenosine 5'-phosphosulfate + diphosphate. It participates in sulfur metabolism; hydrogen sulfide biosynthesis; sulfite from sulfate: step 1/3. In terms of biological role, with CysN forms the ATP sulfurylase (ATPS) that catalyzes the adenylation of sulfate producing adenosine 5'-phosphosulfate (APS) and diphosphate, the first enzymatic step in sulfur assimilation pathway. APS synthesis involves the formation of a high-energy phosphoric-sulfuric acid anhydride bond driven by GTP hydrolysis by CysN coupled to ATP hydrolysis by CysD. The sequence is that of Sulfate adenylyltransferase subunit 2 from Serratia proteamaculans (strain 568).